A 98-amino-acid chain; its full sequence is uncharacterized protein (98 aa).

This sequence belongs to the YciI family. In terms of assembly, homodimer.

This is an uncharacterized protein from Haemophilus influenzae (strain ATCC 51907 / DSM 11121 / KW20 / Rd).